Here is a 198-residue protein sequence, read N- to C-terminus: Ribonuclease HII (198 aa).

One can recognise an RNase H type-2 domain in the interval 10–198; sequence QLVAGVDEVG…PVKRALGLAS (189 aa). A divalent metal cation contacts are provided by aspartate 16, glutamate 17, and aspartate 108.

This sequence belongs to the RNase HII family. It depends on Mn(2+) as a cofactor. Mg(2+) serves as cofactor.

The protein localises to the cytoplasm. It carries out the reaction Endonucleolytic cleavage to 5'-phosphomonoester.. In terms of biological role, endonuclease that specifically degrades the RNA of RNA-DNA hybrids. The sequence is that of Ribonuclease HII from Shigella boydii serotype 18 (strain CDC 3083-94 / BS512).